The following is a 355-amino-acid chain: Homeobox protein knotted-1-like LET6 (355 aa).

Residues 75–96 form a disordered region; that stretch reads PFMDNNNNNNPQEDNNSSSSSI. Over residues 79-96 the composition is skewed to low complexity; it reads NNNNNNPQEDNNSSSSSI. Residues 237-257 enclose the ELK domain; that stretch reads ELKGQLLRKYSGYLGSLKQEF. Residues 258–321 constitute a DNA-binding region (homeobox; TALE-type); that stretch reads MKKRKKGKLP…NQRKRHWKPS (64 aa).

The protein belongs to the TALE/KNOX homeobox family. Expressed in developing lateral organs and developing ovaries in flowers.

The protein resides in the nucleus. Functionally, may have a role to play in formative events in ovule and embryo morphogenesis. Probably binds to the DNA sequence 5'-TGAC-3'. The polypeptide is Homeobox protein knotted-1-like LET6 (LET6) (Solanum lycopersicum (Tomato)).